The following is a 188-amino-acid chain: Elongation factor P (188 aa).

It belongs to the elongation factor P family.

It localises to the cytoplasm. It functions in the pathway protein biosynthesis; polypeptide chain elongation. Its function is as follows. Involved in peptide bond synthesis. Stimulates efficient translation and peptide-bond synthesis on native or reconstituted 70S ribosomes in vitro. Probably functions indirectly by altering the affinity of the ribosome for aminoacyl-tRNA, thus increasing their reactivity as acceptors for peptidyl transferase. This Leptospira biflexa serovar Patoc (strain Patoc 1 / Ames) protein is Elongation factor P.